The chain runs to 238 residues: Probable transcriptional regulatory protein SSU05_0402 (238 aa).

The protein belongs to the TACO1 family. YeeN subfamily.

The protein localises to the cytoplasm. The polypeptide is Probable transcriptional regulatory protein SSU05_0402 (Streptococcus suis (strain 05ZYH33)).